A 752-amino-acid polypeptide reads, in one-letter code: Glutamate carboxypeptidase 2 (752 aa).

Topologically, residues 1 to 22 (MWNALQDRDSAEVLGHRQRWLR) are cytoplasmic. S10 carries the phosphoserine modification. Residues 23–44 (VGTLVLALTGTFLIGFLFGWFI) traverse the membrane as a helical; Signal-anchor for type II membrane protein segment. Over 45–752 (KPSNEATGNV…AAAETLREVA (708 aa)) the chain is Extracellular. 3 N-linked (GlcNAc...) asparagine glycosylation sites follow: N78, N123, and N155. 2 residues coordinate substrate: R212 and N259. Ca(2+)-binding residues include T271 and Y274. Positions 276 to 589 (ANEHAYRHEL…QVRGAMVFEL (314 aa)) are NAALADase. An N-linked (GlcNAc...) asparagine glycan is attached at N338. Zn(2+) contacts are provided by H379 and D389. A substrate-binding site is contributed by E426. E426 functions as the Nucleophile; for NAALADase activity in the catalytic mechanism. E427 is a binding site for Zn(2+). Ca(2+) contacts are provided by E435 and E438. Residue D455 participates in Zn(2+) binding. Residues N461 and N478 are each glycosylated (N-linked (GlcNAc...) asparagine). Substrate-binding positions include 519-520 (SG), N521, 536-538 (RAR), Y554, and 554-555 (YH). Position 555 (H555) interacts with Zn(2+). N615 carries an N-linked (GlcNAc...) asparagine glycan. The active-site Charge relay system is the S630. A glycan (N-linked (GlcNAc...) asparagine) is linked at N640. Catalysis depends on charge relay system residues D668 and H691. Residue 701-702 (KY) participates in substrate binding. N722 carries N-linked (GlcNAc...) asparagine glycosylation.

Belongs to the peptidase M28 family. M28B subfamily. In terms of assembly, homodimer. Zn(2+) serves as cofactor. As to expression, expressed predominantly in the hippocampal region of the brain and in kidney. Lower levels in the ovary, testis and mandibular gland.

It localises to the cell membrane. It carries out the reaction Release of an unsubstituted, C-terminal glutamyl residue, typically from Ac-Asp-Glu or folylpoly-gamma-glutamates.. The NAALADase and folate hydrolase activities are inhibited by quisqualic acid. Its function is as follows. Has both folate hydrolase and N-acetylated-alpha-linked-acidic dipeptidase (NAALADase) activity. Has a preference for tri-alpha-glutamate peptides. In the intestine, required for the uptake of folate. In the brain, modulates excitatory neurotransmission through the hydrolysis of the neuropeptide, N-aceylaspartylglutamate (NAAG), thereby releasing glutamate. Also exhibits a dipeptidyl-peptidase IV type activity. In vitro, cleaves Gly-Pro-AMC. The sequence is that of Glutamate carboxypeptidase 2 (Folh1) from Mus musculus (Mouse).